The primary structure comprises 145 residues: Large ribosomal subunit protein uL11 (145 aa).

Belongs to the universal ribosomal protein uL11 family. In terms of assembly, part of the ribosomal stalk of the 50S ribosomal subunit. Interacts with L10 and the large rRNA to form the base of the stalk. L10 forms an elongated spine to which L12 dimers bind in a sequential fashion forming a multimeric L10(L12)X complex. One or more lysine residues are methylated.

Functionally, forms part of the ribosomal stalk which helps the ribosome interact with GTP-bound translation factors. The polypeptide is Large ribosomal subunit protein uL11 (Coxiella burnetii (strain CbuK_Q154) (Coxiella burnetii (strain Q154))).